Consider the following 87-residue polypeptide: MNSKVFVVLLLLALSTCVLSEKYCPTPRNTSCKKMNIRNNCCRDSDCTSNAFCCAEPCGNFCHKASDKPGGRRVDPNASCKTGYVYW.

Residues 1–20 (MNSKVFVVLLLLALSTCVLS) form the signal peptide. The region spanning 21–66 (EKYCPTPRNTSCKKMNIRNNCCRDSDCTSNAFCCAEPCGNFCHKAS) is the WAP domain. 5 disulfides stabilise this stretch: C24-C54, C32-C58, C41-C53, C42-C80, and C47-C62.

This sequence belongs to the venom protein 11 family. 01 (wap-1) subfamily. Contains 5 disulfide bonds. Expressed by the venom gland.

The protein resides in the secreted. In terms of biological role, has antibacterial activity. This chain is U14-lycotoxin-Ls1b, found in Lycosa singoriensis (Wolf spider).